The following is a 96-amino-acid chain: Co-chaperonin GroES (96 aa).

This sequence belongs to the GroES chaperonin family. Heptamer of 7 subunits arranged in a ring. Interacts with the chaperonin GroEL.

Its subcellular location is the cytoplasm. In terms of biological role, together with the chaperonin GroEL, plays an essential role in assisting protein folding. The GroEL-GroES system forms a nano-cage that allows encapsulation of the non-native substrate proteins and provides a physical environment optimized to promote and accelerate protein folding. GroES binds to the apical surface of the GroEL ring, thereby capping the opening of the GroEL channel. The sequence is that of Co-chaperonin GroES from Leptospira interrogans serogroup Icterohaemorrhagiae serovar copenhageni (strain Fiocruz L1-130).